The primary structure comprises 371 residues: Chemerin-like receptor 1 (371 aa).

The Extracellular portion of the chain corresponds to 1-39 (MEYDAYNDSGIYDDEYSDGFGYFVDLEEASPWEAKVAPV). Asparagine 7 is a glycosylation site (N-linked (GlcNAc...) asparagine). The helical transmembrane segment at 40–62 (FLVVIYSLVCFLGLLGNGLVIVI) threads the bilayer. Residues 63–73 (ATFKMKKTVNT) are Cytoplasmic-facing. Residues 74–95 (VWFVNLAVADFLFNIFLPMHIT) form a helical membrane-spanning segment. The Extracellular segment spans residues 96 to 112 (YAAMDYHWVFGKAMCKI). Cysteine 110 and cysteine 187 are disulfide-bonded. The helical transmembrane segment at 113 to 133 (SNFLLSHNMYTSVFLLTVISF) threads the bilayer. Residues 134-152 (DRCISVLLPVWSQNHRSIR) are Cytoplasmic-facing. A helical membrane pass occupies residues 153–174 (LAYMTCSAVWVLAFFLSSPSLV). Over 175–222 (FRDTANIHGKITCFNNFSLAAPESSPHPAHSQVVSTGYSRHVAVTVTR) the chain is Extracellular. Asparagine 190 is a glycosylation site (N-linked (GlcNAc...) asparagine). Residues 223–243 (FLCGFLIPVFIITACYLTIVF) traverse the membrane as a helical segment. The Cytoplasmic segment spans residues 244 to 259 (KLQRNRLAKNKKPFKI). The chain crosses the membrane as a helical span at residues 260–280 (IITIIITFFLCWCPYHTLYLL). Residues 281-298 (ELHHTAVPSSVFSLGLPL) are Extracellular-facing. Residues 299-318 (ATAVAIANSCMNPILYVFMG) traverse the membrane as a helical segment. Topologically, residues 319–371 (HDFRKFKVALFSRLANALSEDTGPSSYPSHRSFTKMSSLNEKASVNEKETSTL) are cytoplasmic. Phosphoserine is present on serine 337. Threonine 340 carries the phosphothreonine modification. Residues serine 347, serine 350, and serine 356 each carry the phosphoserine modification. The residue at position 370 (threonine 370) is a Phosphothreonine.

The protein belongs to the chemokine-like receptor (CMKLR) family. In terms of tissue distribution, expressed in the differentiated adipocytes (at protein level). Ubiquitous. Highly expressed in adipose tissue and immature plasmacytoid dendritic cells (DCs) and at lower levels in myeloid DCs, macrophages, and NK cells. Expressed on macrophages isolated from different tissues, including peritoneal cavities, pleural cavities and spleen.

Its subcellular location is the cell membrane. Receptor for the chemoattractant adipokine chemerin/RARRES2 and for the omega-3 fatty acid derived molecule resolvin E1. Interaction with RARRES2 initiates activation of G proteins G(i)/G(o) and beta-arrestin pathways inducing cellular responses via second messenger pathways such as intracellular calcium mobilization, phosphorylation of MAP kinases MAPK1/MAPK3 (ERK1/2), TYRO3, MAPK14/P38MAPK and PI3K leading to multifunctional effects, like, reduction of immune responses, enhancing of adipogenesis and angionesis. Resolvin E1 down-regulates cytokine production in macrophages by reducing the activation of MAPK1/3 (ERK1/2) and NF-kappa-B. Positively regulates adipogenesis and adipocyte metabolism. The protein is Chemerin-like receptor 1 (Cmklr1) of Mus musculus (Mouse).